A 932-amino-acid chain; its full sequence is MYCBP-associated protein (932 aa).

Disordered regions lie at residues 1 to 39 (MMKK…PVSN) and 165 to 187 (EEPK…PPQH). Positions 165-178 (EEPKPKPPKEEERP) are enriched in basic and acidic residues. Position 559 is a phosphoserine (Ser559). Thr560 is subject to Phosphothreonine. Ser566 is modified (phosphoserine). Residues 789–886 (LPDEQGQKSP…TAPSQEPIDP (98 aa)) are disordered. Residues 795-806 (QKSPPVTESKVT) show a composition bias toward polar residues. Residues 810–869 (AGKEDRRGGAQEKKQLGTKDKDDKRGSKTPGKEDRPNSKKLKPKDDKKVVKSASRDRLLS) show a composition bias toward basic and acidic residues.

As to quaternary structure, interacts with MYCBP.

The protein localises to the cytoplasm. It localises to the membrane. May play a role in spermatogenesis. May be involved in synaptic processes. In Mus musculus (Mouse), this protein is MYCBP-associated protein.